The sequence spans 306 residues: Diterpene cyclase eriG (306 aa).

Transmembrane regions (helical) follow at residues 13 to 33 and 43 to 63; these read IFFG…SIFA and ATLV…IYFF. Asparagine 64 carries N-linked (GlcNAc...) asparagine glycosylation. A run of 4 helical transmembrane segments spans residues 115–135, 161–181, 213–233, and 265–285; these read FLPE…TSYG, IAPA…WAGL, LIIT…AGIF, and MFYT…GLGL.

Belongs to the UbiA prenyltransferase family. Mg(2+) is required as a cofactor.

Its subcellular location is the membrane. The enzyme catalyses (2E,6E,10E)-geranylgeranyl diphosphate = (-)-cyatha-3,12-diene + diphosphate. The protein operates within secondary metabolite biosynthesis. Its activity is regulated as follows. EDTA completely blocks the reaction. Diterpene cyclase; part of the gene cluster that mediates the biosynthesis of erinacines, cyathane-xylosides that show unique biological activities, including leishmanicidal activity, stimulating activity for nerve growth-factor synthesis, and agonistic activity toward the kappa opioid receptor. Within the pathway, eriG acts as a diterpene cyclase that converts geranylgeranyl diphosphate (GGPP) into cyatha-3,12-diene. EriG is unable to use geranyl diphosphate (GPP) or farnesyl diphosphate (FPP) as substrates. The first step of the erinacines biosynthesis pathway is catalyzed by the geranylgeranyl diphosphate (GGPP) synthase eriE via conversion of farnesyl pyrophosphate and isopentyl pyrophosphate into geranylgeranyl pyrophosphate (GGPP). GGPP is then substrate of the diterpene cyclase eriG for the production of cyatha-3,12-diene. The cytochrome P450 monooxygenase eriI then hydroxylates cyatha-3,12-diene at C-14 of the seven-membered ring to produce erinacol, which is further hydroxylated at C-15 by the cytochrome P450 monooxygenase eriC to yield cyathadiol. The cytochrome P450 monooxygenase eriA then catalyzes C-11 hydroxylation in the presence of the short chain dehydrogenase/reductase (SDR) eriH, which leads to the production of cyathatriol. The acetyltransferase eriL converts cyathatriol into 11-O-acetyl-cyathatriol. The SDR eriH catalyzes further oxidation of 11-O-acetyl-cyathatriol into 1-O-acetylcyathin A3. Finally, the glycosyl transferase eriJ tranfers xylose from UDP-xylose onto C-14 of 11-O-acetyl-cyathatriol to form eracine Q. EriJ is also able to convert 11-O-acetyl-cyathatriol to eracine Q2 by using UDP-D-glucose as cosubstrate, but at a lower rate. The sequence is that of Diterpene cyclase eriG from Hericium erinaceus (Lion's mane mushroom).